The chain runs to 364 residues: Leucine-rich repeat-containing protein 19 (364 aa).

The N-terminal stretch at 1-20 (MKVTRFMFWLFSMLLPSVKS) is a signal peptide. At 21-264 (QASETEVPCN…SEHEPLGKSW (244 aa)) the chain is on the extracellular side. 4 N-linked (GlcNAc...) asparagine glycosylation sites follow: Asn30, Asn35, Asn46, and Asn88. LRR repeat units follow at residues 44 to 69 (STNV…VLQM), 70 to 93 (YSLL…SFRN), 94 to 117 (LLNL…SFVG), 118 to 141 (LNEL…TFVP), 143 to 163 (NNLK…APQL), and 164 to 190 (PHLE…NWLN). Positions 174 to 225 (NPWNCTCGLLELHNWLNTSNVTLENENMTMCSYPDELKHDSIKSAPFTTECH) constitute an LRRCT domain. Asn177, Asn190, Asn193, Asn200, Asn241, Asn245, and Asn250 each carry an N-linked (GlcNAc...) asparagine glycan. The helical transmembrane segment at 265-285 (AFLVGVVATVLLTSLLIFIAI) threads the bilayer. Topologically, residues 286 to 364 (KCPVWYNILL…IDINEVHEEK (79 aa)) are cytoplasmic.

Interacts with TRAF2 and TRAF6. Strongly expressed in kidney, also expressed in spleen, intestine and colon. Highly expressed in epithelial cells. In kidney, mainly expressed in renal collecting duct epithelial cells.

It is found in the membrane. With respect to regulation, activated by TLR ligands such as LPS, bacterial DNA and peptidoglycan. Pathogen-recognition receptor which mediates the activation of TRAF2- and TRAF6 NF-kappa-B signaling pathways and induces the expression of pro-inflammatory cytokines. In kidney, prevents infection by uropathogenic bacteria by inducing the production of cytokines, chemokines and antimicrobial substances. In gut, involved in host-microbiota interactions, plays a critical role in promoting the recruitment of immune cells and intestinal inflammation. The chain is Leucine-rich repeat-containing protein 19 from Mus musculus (Mouse).